The sequence spans 91 residues: Sec-independent protein translocase protein TatA (91 aa).

Residues 1 to 21 (MGAMSPWHWAIVALVVIILFG) form a helical membrane-spanning segment. Positions 44-91 (KEMQNDNSTPAPTAQQSAPAELPVADTTTAPVTPPAPVQPQHTEPKSA) are disordered. Positions 51–74 (STPAPTAQQSAPAELPVADTTTAP) are enriched in low complexity.

Belongs to the TatA/E family. The Tat system comprises two distinct complexes: a TatABC complex, containing multiple copies of TatA, TatB and TatC subunits, and a separate TatA complex, containing only TatA subunits. Substrates initially bind to the TatABC complex, which probably triggers association of the separate TatA complex to form the active translocon.

It localises to the cell membrane. Part of the twin-arginine translocation (Tat) system that transports large folded proteins containing a characteristic twin-arginine motif in their signal peptide across membranes. TatA could form the protein-conducting channel of the Tat system. This is Sec-independent protein translocase protein TatA from Rhodococcus jostii (strain RHA1).